The primary structure comprises 466 residues: 3-isopropylmalate dehydratase large subunit (466 aa).

[4Fe-4S] cluster contacts are provided by Cys-347, Cys-407, and Cys-410.

Belongs to the aconitase/IPM isomerase family. LeuC type 1 subfamily. Heterodimer of LeuC and LeuD. It depends on [4Fe-4S] cluster as a cofactor.

It catalyses the reaction (2R,3S)-3-isopropylmalate = (2S)-2-isopropylmalate. Its pathway is amino-acid biosynthesis; L-leucine biosynthesis; L-leucine from 3-methyl-2-oxobutanoate: step 2/4. Its function is as follows. Catalyzes the isomerization between 2-isopropylmalate and 3-isopropylmalate, via the formation of 2-isopropylmaleate. The protein is 3-isopropylmalate dehydratase large subunit of Enterobacter sp. (strain 638).